The sequence spans 538 residues: Casein kinase I homolog 1 (538 aa).

The tract at residues 39 to 61 (SPARSSMTATTAANSNSNSSRDD) is disordered. Low complexity predominate over residues 41–57 (ARSSMTATTAANSNSNS). The 285-residue stretch at 69–353 (YKIGKKIGEG…ETADGQYDWM (285 aa)) folds into the Protein kinase domain. Residues 75–83 (IGEGSFGVL) and K98 each bind ATP. D188 acts as the Proton acceptor in catalysis. 2 disordered regions span residues 366 to 428 (NKKP…KPKL) and 474 to 527 (QQQL…LAAS). Low complexity-rich tracts occupy residues 391 to 410 (QLQM…QQQQ) and 474 to 498 (QQQL…QFGA). Residues S522, S523, and S527 each carry the phosphoserine modification. Residues C537 and C538 are each lipidated (S-palmitoyl cysteine).

It belongs to the protein kinase superfamily. CK1 Ser/Thr protein kinase family. Casein kinase I subfamily. Palmitoylated by AKR1.

The protein resides in the cell membrane. Its subcellular location is the mitochondrion membrane. The enzyme catalyses L-seryl-[protein] + ATP = O-phospho-L-seryl-[protein] + ADP + H(+). It catalyses the reaction L-threonyl-[protein] + ATP = O-phospho-L-threonyl-[protein] + ADP + H(+). In terms of biological role, casein kinases are operationally defined by their preferential utilization of acidic proteins such as caseins as substrates. This Saccharomyces cerevisiae (strain ATCC 204508 / S288c) (Baker's yeast) protein is Casein kinase I homolog 1 (YCK1).